The sequence spans 399 residues: Small ribosomal subunit protein uS3m (399 aa).

Belongs to the universal ribosomal protein uS3 family.

It is found in the mitochondrion. In terms of biological role, essential for mitochondrial protein synthesis and required for the maturation of small ribosomal subunits. In Penicillium urticae, this protein is Small ribosomal subunit protein uS3m.